The sequence spans 138 residues: ATP synthase epsilon chain (138 aa).

The protein belongs to the ATPase epsilon chain family. F-type ATPases have 2 components, CF(1) - the catalytic core - and CF(0) - the membrane proton channel. CF(1) has five subunits: alpha(3), beta(3), gamma(1), delta(1), epsilon(1). CF(0) has three main subunits: a, b and c.

Its subcellular location is the cell membrane. In terms of biological role, produces ATP from ADP in the presence of a proton gradient across the membrane. The polypeptide is ATP synthase epsilon chain (Streptococcus equi subsp. equi (strain 4047)).